We begin with the raw amino-acid sequence, 179 residues long: Inosine/xanthosine triphosphatase (179 aa).

Residues 8 to 13 (TTNPAK) and 68 to 69 (EA) contribute to the substrate site. Glu-68 provides a ligand contact to Mg(2+).

Belongs to the YjjX NTPase family. Homodimer. It depends on Mg(2+) as a cofactor. Requires Mn(2+) as cofactor.

The enzyme catalyses XTP + H2O = XDP + phosphate + H(+). It carries out the reaction ITP + H2O = IDP + phosphate + H(+). Phosphatase that hydrolyzes non-canonical purine nucleotides such as XTP and ITP to their respective diphosphate derivatives. Probably excludes non-canonical purines from DNA/RNA precursor pool, thus preventing their incorporation into DNA/RNA and avoiding chromosomal lesions. The protein is Inosine/xanthosine triphosphatase of Serratia proteamaculans (strain 568).